Here is a 217-residue protein sequence, read N- to C-terminus: Oxygen-insensitive NAD(P)H nitroreductase (217 aa).

Position 10–14 (Arg10–Lys14) interacts with FMN. NAD(+) is bound by residues Lys14, Thr41, Asn71, Lys74, and Arg107. Asn71 contacts FMN. Residues Glu165–Gly166 and Lys205–Arg207 each bind FMN.

The protein belongs to the nitroreductase family. Homodimer. Requires FMN as cofactor.

Functionally, reduction of a variety of nitroaromatic compounds using NADH (and to lesser extent NADPH) as source of reducing equivalents; two electrons are transferred. Capable of reducing nitrofurazone. This Salmonella typhimurium (strain LT2 / SGSC1412 / ATCC 700720) protein is Oxygen-insensitive NAD(P)H nitroreductase.